The following is a 183-amino-acid chain: Dual-action ribosomal maturation protein DarP (183 aa).

The protein belongs to the DarP family.

The protein resides in the cytoplasm. Functionally, member of a network of 50S ribosomal subunit biogenesis factors which assembles along the 30S-50S interface, preventing incorrect 23S rRNA structures from forming. Promotes peptidyl transferase center (PTC) maturation. This Salmonella gallinarum (strain 287/91 / NCTC 13346) protein is Dual-action ribosomal maturation protein DarP.